Here is a 250-residue protein sequence, read N- to C-terminus: Ubiquinone/menaquinone biosynthesis C-methyltransferase UbiE (250 aa).

S-adenosyl-L-methionine is bound by residues Thr73, Asp94, 122 to 123, and Ser139; that span reads NA.

Belongs to the class I-like SAM-binding methyltransferase superfamily. MenG/UbiE family.

The enzyme catalyses a 2-demethylmenaquinol + S-adenosyl-L-methionine = a menaquinol + S-adenosyl-L-homocysteine + H(+). It carries out the reaction a 2-methoxy-6-(all-trans-polyprenyl)benzene-1,4-diol + S-adenosyl-L-methionine = a 5-methoxy-2-methyl-3-(all-trans-polyprenyl)benzene-1,4-diol + S-adenosyl-L-homocysteine + H(+). The protein operates within quinol/quinone metabolism; menaquinone biosynthesis; menaquinol from 1,4-dihydroxy-2-naphthoate: step 2/2. Its pathway is cofactor biosynthesis; ubiquinone biosynthesis. In terms of biological role, methyltransferase required for the conversion of demethylmenaquinol (DMKH2) to menaquinol (MKH2) and the conversion of 2-polyprenyl-6-methoxy-1,4-benzoquinol (DDMQH2) to 2-polyprenyl-3-methyl-6-methoxy-1,4-benzoquinol (DMQH2). The polypeptide is Ubiquinone/menaquinone biosynthesis C-methyltransferase UbiE (Francisella tularensis subsp. tularensis (strain FSC 198)).